Reading from the N-terminus, the 97-residue chain is uncharacterized protein (97 aa).

The protein to M.thermoautotrophicum MTH1236.

This is an uncharacterized protein from Methanocaldococcus jannaschii (strain ATCC 43067 / DSM 2661 / JAL-1 / JCM 10045 / NBRC 100440) (Methanococcus jannaschii).